We begin with the raw amino-acid sequence, 291 residues long: 33 kDa chaperonin (291 aa).

Cystine bridges form between Cys235-Cys237 and Cys268-Cys271.

Belongs to the HSP33 family. Under oxidizing conditions two disulfide bonds are formed involving the reactive cysteines. Under reducing conditions zinc is bound to the reactive cysteines and the protein is inactive.

The protein resides in the cytoplasm. In terms of biological role, redox regulated molecular chaperone. Protects both thermally unfolding and oxidatively damaged proteins from irreversible aggregation. Plays an important role in the bacterial defense system toward oxidative stress. In Streptococcus agalactiae serotype III (strain NEM316), this protein is 33 kDa chaperonin.